Reading from the N-terminus, the 197-residue chain is NADH-quinone oxidoreductase subunit B (197 aa).

[4Fe-4S] cluster-binding residues include Cys76, Cys77, Cys141, and Cys171.

It belongs to the complex I 20 kDa subunit family. As to quaternary structure, NDH-1 is composed of 14 different subunits. Subunits NuoB, C, D, E, F, and G constitute the peripheral sector of the complex. It depends on [4Fe-4S] cluster as a cofactor.

It localises to the cell inner membrane. It carries out the reaction a quinone + NADH + 5 H(+)(in) = a quinol + NAD(+) + 4 H(+)(out). NDH-1 shuttles electrons from NADH, via FMN and iron-sulfur (Fe-S) centers, to quinones in the respiratory chain. The immediate electron acceptor for the enzyme in this species is believed to be ubiquinone. Couples the redox reaction to proton translocation (for every two electrons transferred, four hydrogen ions are translocated across the cytoplasmic membrane), and thus conserves the redox energy in a proton gradient. This Methylobacterium nodulans (strain LMG 21967 / CNCM I-2342 / ORS 2060) protein is NADH-quinone oxidoreductase subunit B.